The following is a 417-amino-acid chain: Squamosa promoter-binding-like protein 14 (417 aa).

Gly residues-rich tracts occupy residues 1-26 and 51-60; these read MEMA…GGGG and AGGGGTGSGS. 2 disordered regions span residues 1–32 and 51–102; these read MEMA…EHRQ and AGGG…PPPP. Residues 61–74 show a composition bias toward low complexity; it reads GSASAAPPSSSSKA. Residues 75 to 84 show a composition bias toward gly residues; sequence AGGGRGGGGK. The SBP-type zinc finger occupies 101–178; that stretch reads PPRCQVEGCG…AGHNERRRRP (78 aa). Residues Cys-104, Cys-109, Cys-126, His-129, Cys-145, Cys-148, and His-152 each coordinate Zn(2+). Positions 161–177 match the Bipartite nuclear localization signal motif; sequence KRSCRRRLAGHNERRRR. Residue Ser-163 is modified to Phosphoserine. Cys-164 is a binding site for Zn(2+). The segment at 387 to 417 is disordered; that stretch reads LQGNGPAPAPRIDPGSGSTFDQTSNTMDWSL. Polar residues predominate over residues 402-417; sequence SGSTFDQTSNTMDWSL.

Interacts with PCF1 and PCF2. Interacts with IPI1. Interacts with D53. Interacts with SLR1. Interacts (via C-terminus) with SHI1. Phosphorylated at Ser-163 in response to infection by the fungal pathogen Magnaporthe oryzae. In terms of processing, ubiquitinated by IPI1, which leads to proteasomal degradation. Expressed in young panicles. Expressed in the shoot apex at both the vegetative and reproductive stages. Highly expressed in the promordia of primary and secondary branches. Highly expressed in young panicles.

The protein resides in the nucleus. Functionally, transcriptional activator that binds to the SBP-box DNA core binding motif 5'-GTAC-3'. Can target the TCP motif 5'-TGGGCC/T-3' through interaction with PCF1 and PCF2. Key regulator of the plant architecture that controls shoot branching and panicle development. Promotes panicle branching. Promotes high grain yield. Binds to the promoters of TB1 and DEP1. Suppresses rice tillering mainly through positive regulation of TB1. Regulates plant height and panicle length through positive regulation of DEP1. Repressed by D53 in strigolactone (SL) signaling. Acts with D53 to mediate the SL-regulated tiller development. Functions as a direct downstream component of D53 in regulating tiller number and SL-induced gene expression. Binds directly to the D53 promoter and plays a critical role in the negative feedback regulation of SL-induced D53 expression. Involved in defense response against pathogens. Phosphorylated at Ser-163 in response to infection by the fungal pathogen Magnaporthe oryzae. Phosphorylation reduces SPL14/IPA1 binding to the GTAC site in the DEP1 promoter and enhances binding to the TGGGCC site in the WRKY45 promoter. Binding to the promoter of the pathogen defense gene WRKY45 activates its expression, leading to enhanced disease resistance. Reduces gibberellin-mediated disease susceptibility by stabilizing SLR1. Possesses transactivation activity in yeast cells. This chain is Squamosa promoter-binding-like protein 14, found in Oryza sativa subsp. japonica (Rice).